The sequence spans 239 residues: Small ribosomal subunit protein uS2c (239 aa).

The protein belongs to the universal ribosomal protein uS2 family.

Its subcellular location is the plastid. The protein is Small ribosomal subunit protein uS2c (rps2) of Aneura mirabilis (Parasitic liverwort).